A 266-amino-acid polypeptide reads, in one-letter code: Probable matrix protein (266 aa).

The tract at residues 158–177 is disordered; the sequence is ACSAGTGGTEEGDSDTEEEP. The span at 167–177 shows a compositional bias: acidic residues; sequence EEGDSDTEEEP.

Its subcellular location is the virion. Functionally, may play a role in virion budding and release by binding the ribonucleocapsid and the host membrane. This is Probable matrix protein from Ixodidae (hardbacked ticks).